The primary structure comprises 580 residues: MELTIEEMLIKQKETGAHYTPTDLGDIIAKRLINELKKSGISGTKKIRGLDPSCGDGELLLSLNRMGKFNNIDNIELIGIDEDKEAIKEADFRLNEMGINDAKLSGGDFLDMVDLEGNLSLFDDDLSKIEPVDLIIANPPYVRTQVLGADRAQKLAKLFNLKGRVDLYHAFLVAMTLQLKPGGLIGVITSNKYLANTTGESIRQFLAENYDIIEIMDLGDTKLFSGAVLQAIFFGTKKLNKGIRQTAPANFYKIYEETDPSKTEVSIKFETLFGLLESSNTGVFNVDEKFYSVSCGKLIVPDSFKEPWVMATDEEYNWITNINNNSYCTIQDLCDLKVGIKTTADKVFIKSTWEELPDEIKPEVEVLKLLISTDHASKWRPLERIGNQKILYTHENLNGKKKAIHFTQYPHALAYLETHRETLEGRKYVIKAKRNWYQIWLPQNPDHWALPKILFPDISPEPKFFYEDEGCCIDGNCYWIIPKEENNNDILFLILGISNTKYMTNYHDIAFNNKLYPGRTRYLTQYVSNYPLPNPEANYSQEIIDVLRELLFQNPNDERKIEIENQIENLTALAFGVERL.

This sequence belongs to the N(4)/N(6)-methyltransferase family.

It carries out the reaction a 2'-deoxyadenosine in DNA + S-adenosyl-L-methionine = an N(6)-methyl-2'-deoxyadenosine in DNA + S-adenosyl-L-homocysteine + H(+). In terms of biological role, a gamma subtype methylase, recognizes the double-stranded sequence 5'-ATCGAT-3', methylates A-5 on both strands, and protects the DNA from cleavage by the BanIII endonuclease. The protein is Type II methyltransferase M.BanIII (banIIIM) of Aneurinibacillus aneurinilyticus (Bacillus aneurinolyticus).